The chain runs to 292 residues: Techylectin-5A (292 aa).

Residues Met-1–Ser-23 form the signal peptide. Position 24 is a pyrrolidone carboxylic acid (Gln-24). One can recognise a Fibrinogen C-terminal domain in the interval Pro-63 to Glu-286. A disulfide bridge links Cys-72 with Cys-103. N-linked (GlcNAc...) asparagine glycans are attached at residues Asn-173, Asn-198, and Asn-214. Asp-221, His-225, and Thr-227 together coordinate Ca(2+). A disulfide bridge links Cys-229 with Cys-242.

Multimeric. PubMed:10468566 and PubMed:11707569 are in disagreement about the nature of the multimer, PubMed:10468566 finds hexamers and octamers, the results in PubMed:11707569 suggest tetramers. As to expression, strongly expressed in heart and intestine, weakly expressed in hepatopancreas. Not found in hemocytes, stomach, nervous tissue or skeletal muscle.

Its subcellular location is the secreted. Its function is as follows. Lectin involved in innate immunity. Agglutinates all types of human erythrocytes, Gram-positive and Gram-negative bacteria. Has a stronger agglutinating activity towards Gram-negative bacteria than towards Gram-positive bacteria. Specifically recognizes acetyl group-containing substances on agglutinated cells. The hemagglutinating activity was inhibited by EDTA, acetyl group-containing mono- and disaccharides, N-acetyl derivatives of amino acids, other acetyl group-containing substances, propionamide and benzamide. Enhances the antimicrobial activity of big defensin against Gram-positive bacteria but not against Gram-negative bacteria. In Tachypleus tridentatus (Japanese horseshoe crab), this protein is Techylectin-5A.